Here is a 317-residue protein sequence, read N- to C-terminus: Succinate receptor 1 (317 aa).

Residues 1–23 (MAQNLSCENWLATEAILNKYYLS) are Extracellular-facing. N-linked (GlcNAc...) asparagine glycosylation occurs at asparagine 4. A helical transmembrane segment spans residues 24–47 (AFYAIEFIFGLLGNVTVVFGYLFC). Topologically, residues 48–55 (MKNWNSSN) are cytoplasmic. Residues 56–76 (VYLFNLSISDFAFLCTLPILI) form a helical membrane-spanning segment. Over 77 to 101 (KSYANDKGTYGDVLCISNRYVLHTN) the chain is Extracellular. A disulfide bridge connects residues cysteine 91 and cysteine 168. A helical membrane pass occupies residues 102 to 119 (LYTSILFLTFISMDRYLL). Topologically, residues 120–133 (MKYPFREHFLQKKE) are cytoplasmic. Residues 134 to 157 (FAILISLAVWALVTLEVLPMLTFI) traverse the membrane as a helical segment. Topologically, residues 158–180 (NSVPKEEGSNCIDYASSGNPEHN) are extracellular. A helical membrane pass occupies residues 181 to 204 (LIYSLCLTLLGFLIPLSVMCFFYY). At 205–228 (KMVVFLKRRSQQQATALPLDKPQR) the chain is on the cytoplasmic side. The helical transmembrane segment at 229-246 (LVVLAVVIFSILFTPYHI) threads the bilayer. Residues 247–277 (MRNLRIASRLDSWPQGCTQKAIKSIYTLTRP) are Extracellular-facing. A helical transmembrane segment spans residues 278–294 (LAFLNSAINPIFYFLMG). The Cytoplasmic segment spans residues 295 to 317 (DHYREMLISKFRQYFKSLTSFRT).

The protein belongs to the G-protein coupled receptor 1 family. As to expression, predominantly expressed in the kidney (proximal and distal tubules and the juxtaglomerular apparatus). Weakly expressed in liver, spleen and small intestine. Highly expressed in immature dendritic cells, expression rapidly downregulates after maturation. Also expressed in macrophages. Specifically expressed in intestinal tuft cells. Expression in whole muscle is attributable to major non-myofibrillar resident cell types, including stromal, endothelial and satellite cell populations.

It is found in the cell membrane. G protein-coupled receptor for succinate able to mediate signaling through Gq/GNAQ or Gi/GNAI second messengers depending on the cell type and the processes regulated. Succinate-SUCNR1 signaling serves as a link between metabolic stress, inflammation and energy homeostasis. In macrophages, plays a range of immune-regulatory roles. During inflammation, succinate-SUCNR1 signaling may act as an anti-inflammatory mediator or boost inflammation depending on the inflammatory status of cells. Hyperpolarizes M2 macrophages versus M1 phenotype through Gq signaling by regulating the transcription of genes involved in immune function. In activated M1 macrophages, plays a pro-inflammatory role in response to LPS. Expressed in dendritic cells, where it is involved in the sensing of immunological danger and enhances immunity. Mediates succinate triggered intracelleular calcium mobilization, induces migratory responses and acts in synergy with Toll-like receptor ligands for the production of proinflammatory cytokines as well as an enhancement of antigen-specific activation of helper T cells. In the small intestine, mediates the activation of tuft cells by dietary succinate and triggers type 2 immunity. In adipocytes, plays an important role in the control of energy metabolism. In response to succinate, controls leptin expression in an AMPK-JNK-CEBPA-dependent as well as circadian clock-regulated manner. In muscle tissue, is expressed in non-muscle cells and coordinates muscle remodeling in response to the succinate produced during exercise training in a paracrine manner. In retina, acts as a mediator of vessel growth during retinal development. In response to succinate, regulates the production of angiogenic factors, including VEGF, by retinal ganglion neurons. This chain is Succinate receptor 1 (Sucnr1), found in Mus musculus (Mouse).